The sequence spans 157 residues: 2-C-methyl-D-erythritol 2,4-cyclodiphosphate synthase (157 aa).

Positions 8 and 10 each coordinate a divalent metal cation. Residues 8-10 (DVH) and 34-35 (HS) each bind 4-CDP-2-C-methyl-D-erythritol 2-phosphate. His42 is a binding site for a divalent metal cation. 4-CDP-2-C-methyl-D-erythritol 2-phosphate contacts are provided by residues 56–58 (DIG), 132–135 (TTNE), and Arg142.

Belongs to the IspF family. As to quaternary structure, homotrimer. A divalent metal cation serves as cofactor.

The enzyme catalyses 4-CDP-2-C-methyl-D-erythritol 2-phosphate = 2-C-methyl-D-erythritol 2,4-cyclic diphosphate + CMP. It functions in the pathway isoprenoid biosynthesis; isopentenyl diphosphate biosynthesis via DXP pathway; isopentenyl diphosphate from 1-deoxy-D-xylulose 5-phosphate: step 4/6. Involved in the biosynthesis of isopentenyl diphosphate (IPP) and dimethylallyl diphosphate (DMAPP), two major building blocks of isoprenoid compounds. Catalyzes the conversion of 4-diphosphocytidyl-2-C-methyl-D-erythritol 2-phosphate (CDP-ME2P) to 2-C-methyl-D-erythritol 2,4-cyclodiphosphate (ME-CPP) with a corresponding release of cytidine 5-monophosphate (CMP). The polypeptide is 2-C-methyl-D-erythritol 2,4-cyclodiphosphate synthase (Chlorobaculum parvum (strain DSM 263 / NCIMB 8327) (Chlorobium vibrioforme subsp. thiosulfatophilum)).